We begin with the raw amino-acid sequence, 313 residues long: Nematocyst expressed protein 8 (313 aa).

The N-terminal stretch at 1 to 19 is a signal peptide; that stretch reads MLRRPLLLVLFTVFSTLYA. Residues 24 to 56 form a disordered region; sequence GVSPPTNESEAEVSPGDDEGPPEPGNEPDVNWR. Positions 32–44 are enriched in acidic residues; sequence SEAEVSPGDDEGP. ShKT domains follow at residues 65–99, 109–145, and 151–186; these read CKDK…CRFC, CKDL…CELC, and FKYT…CRKY. Cystine bridges form between Cys-65-Cys-99, Cys-72-Cys-92, Cys-81-Cys-96, Cys-109-Cys-145, Cys-127-Cys-142, Cys-160-Cys-179, and Cys-169-Cys-183. The span at 222 to 244 shows a compositional bias: low complexity; it reads TAAPSTQPAETTKAPPNTAAPTA. A disordered region spans residues 222-313; it reads TAAPSTQPAE…LCDEKHSSQQ (92 aa). Residues 245–265 are compositionally biased toward pro residues; the sequence is APTPAPTPAPAPAPTPAPVAP. Over residues 280–297 the composition is skewed to acidic residues; the sequence is TPEEQDDNSADESTEIEA.

The protein belongs to the NEP3 family. In terms of tissue distribution, nematocytes. In late planulae, is only expressed in a handful of nematocytes in the lower pharynx. Is absent from the tentacles and outer body wall.

The protein resides in the nematocyst. Its subcellular location is the secreted. Functionally, probable toxin probably only used for predation. In Nematostella vectensis (Starlet sea anemone), this protein is Nematocyst expressed protein 8.